Consider the following 456-residue polypeptide: Bifunctional protein GlmU (456 aa).

The tract at residues 1-229 (MLNNAMSVVI…LSEVEGVNNR (229 aa)) is pyrophosphorylase. UDP-N-acetyl-alpha-D-glucosamine-binding positions include 11–14 (LAAG), Lys25, Gln76, 81–82 (GT), 103–105 (YGD), Gly140, Glu154, Asn169, and Asn227. Asp105 provides a ligand contact to Mg(2+). Position 227 (Asn227) interacts with Mg(2+). Residues 230 to 250 (LQLSRLERVYQSEQAEKLLLA) are linker. Residues 251-456 (GVMLRDPARF…EGWRRPVKKK (206 aa)) form an N-acetyltransferase region. Positions 333 and 351 each coordinate UDP-N-acetyl-alpha-D-glucosamine. His363 functions as the Proton acceptor in the catalytic mechanism. UDP-N-acetyl-alpha-D-glucosamine contacts are provided by Tyr366 and Asn377. Residues Ala380, 386-387 (NY), Ser405, Ala423, and Arg440 contribute to the acetyl-CoA site.

The protein in the N-terminal section; belongs to the N-acetylglucosamine-1-phosphate uridyltransferase family. This sequence in the C-terminal section; belongs to the transferase hexapeptide repeat family. In terms of assembly, homotrimer. Requires Mg(2+) as cofactor.

It localises to the cytoplasm. It catalyses the reaction alpha-D-glucosamine 1-phosphate + acetyl-CoA = N-acetyl-alpha-D-glucosamine 1-phosphate + CoA + H(+). The catalysed reaction is N-acetyl-alpha-D-glucosamine 1-phosphate + UTP + H(+) = UDP-N-acetyl-alpha-D-glucosamine + diphosphate. Its pathway is nucleotide-sugar biosynthesis; UDP-N-acetyl-alpha-D-glucosamine biosynthesis; N-acetyl-alpha-D-glucosamine 1-phosphate from alpha-D-glucosamine 6-phosphate (route II): step 2/2. The protein operates within nucleotide-sugar biosynthesis; UDP-N-acetyl-alpha-D-glucosamine biosynthesis; UDP-N-acetyl-alpha-D-glucosamine from N-acetyl-alpha-D-glucosamine 1-phosphate: step 1/1. It functions in the pathway bacterial outer membrane biogenesis; LPS lipid A biosynthesis. Its function is as follows. Catalyzes the last two sequential reactions in the de novo biosynthetic pathway for UDP-N-acetylglucosamine (UDP-GlcNAc). The C-terminal domain catalyzes the transfer of acetyl group from acetyl coenzyme A to glucosamine-1-phosphate (GlcN-1-P) to produce N-acetylglucosamine-1-phosphate (GlcNAc-1-P), which is converted into UDP-GlcNAc by the transfer of uridine 5-monophosphate (from uridine 5-triphosphate), a reaction catalyzed by the N-terminal domain. In Shigella flexneri serotype 5b (strain 8401), this protein is Bifunctional protein GlmU.